Reading from the N-terminus, the 422-residue chain is 5-hydroxytryptamine receptor 1A (422 aa).

The Extracellular portion of the chain corresponds to 1–38 (MDVFSFGQGNNTTASQEPFGTGGNVTSISDVTFSYQVI). Asn10, Asn11, and Asn24 each carry an N-linked (GlcNAc...) asparagine glycan. A helical transmembrane segment spans residues 39–59 (TSLLLGTLIFCAVLGNACVVA). Over 60 to 73 (AIALERSLQNVANY) the chain is Cytoplasmic. The chain crosses the membrane as a helical span at residues 74–98 (LIGSLAVTDLMVSVLVLPMAALYQV). Over 99 to 107 (LNKWTLGQV) the chain is Extracellular. Residues 108–132 (TCDLFIALDVLCCTSSILHLCAIAL) form a helical membrane-spanning segment. A disulfide bond links Cys109 and Cys187. Serotonin-binding residues include Asp116 and Cys120. The short motif at 133–135 (DRY) is the DRY motif; important for ligand-induced conformation changes element. The Cytoplasmic portion of the chain corresponds to 133–152 (DRYWAITDPIDYVNKRTPRR). Residues 153-174 (AAALISLTWLIGFLISIPPMLG) traverse the membrane as a helical segment. At 175–193 (WRTPEDRSDPDACTISKDH) the chain is on the extracellular side. Residues 194–216 (GYTIYSTFGAFYIPLLLMLVLYG) form a helical membrane-spanning segment. Residues 217–346 (RIFRAARFRI…LARERKTVKT (130 aa)) lie on the Cytoplasmic side of the membrane. Residues 235–261 (KKGAGTSLGTSSAPPPKKSLNGQPGSG) form a disordered region. Positions 345, 346, and 352 each coordinate 1D-myo-inositol 4-phosphate. The chain crosses the membrane as a helical span at residues 347-370 (LGIIMGTFILCWLPFFIVALVLPF). Residues 371–378 (CESSCHMP) are Extracellular-facing. The chain crosses the membrane as a helical span at residues 379–403 (ALLGAIINWLGYSNSLLNPVIYAYF). The NPxxY motif; important for ligand-induced conformation changes and signaling motif lies at 396–400 (NPVIY). 1D-myo-inositol 4-phosphate is bound by residues Phe403, Asn404, and Lys405. The Cytoplasmic portion of the chain corresponds to 404-422 (NKDFQNAFKKIIKCKFCRR).

This sequence belongs to the G-protein coupled receptor 1 family. 5-hydroxytryptamine receptor subfamily. HTR1A sub-subfamily. In terms of assembly, heterodimer; heterodimerizes with GPER1. Interacts with YIF1B. Interacts with GPR39 and GALR1. Detected in hypothalamus, mesencephalon, amygdala, medulla, thalamus, septum and hippocampus.

It localises to the cell membrane. The protein localises to the cell projection. Its subcellular location is the dendrite. Its activity is regulated as follows. G-protein coupled receptor activity is regulated by lipids: phosphatidylinositol 4-phosphate increases HTR1A-mediated activity. Its function is as follows. G-protein coupled receptor for 5-hydroxytryptamine (serotonin). Also functions as a receptor for various drugs and psychoactive substances. Ligand binding causes a conformation change that triggers signaling via guanine nucleotide-binding proteins (G proteins) and modulates the activity of downstream effectors, such as adenylate cyclase. HTR1A is coupled to G(i)/G(o) G alpha proteins and mediates inhibitory neurotransmission: signaling inhibits adenylate cyclase activity and activates a phosphatidylinositol-calcium second messenger system that regulates the release of Ca(2+) ions from intracellular stores. Beta-arrestin family members regulate signaling by mediating both receptor desensitization and resensitization processes. This chain is 5-hydroxytryptamine receptor 1A, found in Rattus norvegicus (Rat).